The following is a 738-amino-acid chain: Catalase-peroxidase (738 aa).

Residues 1 to 13 (MDGQDIGAGGGCP) show a composition bias toward gly residues. A disordered region spans residues 1–26 (MDGQDIGAGGGCPFSGANTNKGRRSN). The tryptophyl-tyrosyl-methioninium (Trp-Tyr) (with M-252) cross-link spans 98–226 (WHSAGTYRTA…LAAVQMGLIY (129 aa)). His99 acts as the Proton acceptor in catalysis. The segment at residues 226–252 (YVNPEGPDGNPDPIASGRDIRETFARM) is a cross-link (tryptophyl-tyrosyl-methioninium (Tyr-Met) (with W-98)). His267 serves as a coordination point for heme b.

It belongs to the peroxidase family. Peroxidase/catalase subfamily. As to quaternary structure, homodimer or homotetramer. Heme b serves as cofactor. In terms of processing, formation of the three residue Trp-Tyr-Met cross-link is important for the catalase, but not the peroxidase activity of the enzyme.

It catalyses the reaction H2O2 + AH2 = A + 2 H2O. It carries out the reaction 2 H2O2 = O2 + 2 H2O. Bifunctional enzyme with both catalase and broad-spectrum peroxidase activity. This is Catalase-peroxidase from Ruegeria sp. (strain TM1040) (Silicibacter sp.).